Here is a 337-residue protein sequence, read N- to C-terminus: Major envelope glycoprotein (337 aa).

N-linked (GlcNAc...) asparagine; by host glycans are attached at residues N76, N114, N271, and N301.

Belongs to the baculoviridae gp64 family. In terms of processing, palmitoylated.

It localises to the virion membrane. The protein resides in the host cell membrane. In terms of biological role, envelope phosphoglycoprotein which mediates the fusion of viral and host endosomal membranes leading to virus entry into the host cell. The protein is Major envelope glycoprotein (GP67) of Lepidoptera (butterflies and moths).